The chain runs to 478 residues: Aspartate ammonia-lyase (478 aa).

The L-aspartate site is built by T109, S148, T149, N150, and T195. Residues 326–335 (GSSIMPGKVN) are SS loop. Catalysis depends on S327, which acts as the Proton acceptor. L-aspartate is bound by residues S328 and K333.

Belongs to the class-II fumarase/aspartase family. Aspartase subfamily. As to quaternary structure, homotetramer.

It carries out the reaction L-aspartate = fumarate + NH4(+). Catalyzes the reversible conversion of L-aspartate to fumarate and ammonia. In Pseudomonas fluorescens, this protein is Aspartate ammonia-lyase.